A 210-amino-acid chain; its full sequence is Glutathione S-transferase 2 (210 aa).

Residues 1–80 form the GST N-terminal domain; sequence MDFYYLPLSA…YLVEKYGKQN (80 aa). Glutathione contacts are provided by residues serine 9, 50 to 52, and 64 to 66; these read HTI and ESR. Residues 87–208 enclose the GST C-terminal domain; it reads CPKKRALINQ…AGCLEMKKYF (122 aa).

This sequence belongs to the GST superfamily. Theta family. Homodimer.

The catalysed reaction is RX + glutathione = an S-substituted glutathione + a halide anion + H(+). In terms of biological role, conjugation of reduced glutathione to a wide number of exogenous and endogenous hydrophobic electrophiles. In Musca domestica (House fly), this protein is Glutathione S-transferase 2 (Gst2).